We begin with the raw amino-acid sequence, 583 residues long: Torsin-1A-interacting protein 1 (583 aa).

The segment covering 1–12 (MAGDGRRAEAVR) has biased composition (basic and acidic residues). Disordered regions lie at residues 1-254 (MAGD…RSSS) and 271-293 (AHDK…WAPQ). Over 1–338 (MAGDGRRAEA…NASFVKRNRW (338 aa)) the chain is Nuclear. A Phosphoserine modification is found at Ser-60. Basic and acidic residues-rich tracts occupy residues 74–101 (VAKE…EVRE) and 115–124 (RPQETEEMKT). Phosphoserine occurs at positions 135 and 143. Met-146 carries the post-translational modification Methionine sulfoxide. Phosphoserine occurs at positions 154, 156, and 157. The segment covering 165-174 (QTDLSQTISK) has biased composition (polar residues). Phosphoserine is present on residues Ser-186 and Ser-215. The span at 216-225 (EEGETEEDDQ) shows a compositional bias: acidic residues. Thr-220 carries the post-translational modification Phosphothreonine. 3 positions are modified to phosphoserine: Ser-227, Ser-230, and Ser-242. Over residues 238-250 (RSRDSDESGDKTT) the composition is skewed to basic and acidic residues. Residues 277 to 287 (SVLSSGYQKTP) are compositionally biased toward polar residues. Methionine sulfoxide is present on Met-301. A Phosphoserine modification is found at Ser-305. Lys-308 participates in a covalent cross-link: Glycyl lysine isopeptide (Lys-Gly) (interchain with G-Cter in SUMO2). Ser-309 and Ser-315 each carry phosphoserine. The interval 309 to 328 (SELGNQSPSTSSRQVTGQPQ) is disordered. Residues 339 to 355 (WLLPLIAALASGSFWFF) form a helical membrane-spanning segment. Topologically, residues 356–583 (STPEVETTAV…ENALKRGICL (228 aa)) are perinuclear space. The interval 356–583 (STPEVETTAV…ENALKRGICL (228 aa)) is interaction with TOR1A. Residues 359 to 435 (EVETTAVQEF…SEQIADAYSS (77 aa)) adopt a coiled-coil conformation. A glycan (N-linked (GlcNAc...) asparagine) is linked at Asn-399. A Methionine sulfoxide modification is found at Met-552.

It belongs to the TOR1AIP family. As to quaternary structure, interacts with ATP1B4. Interacts with TOR1A (ATP-bound). Interacts with TOR1B, TOR2A and TOR3A. Interacts with VIM. Post-translationally, phosphorylated. Dephosphorylated at Ser-309 and Ser-315 by serine/threonine-protein phosphatase PP1. Expressed in muscle, liver and kidney. As to expression, major isoform present in liver, brain and heart (at protein level). Expressed at lower levels than isoform 4 in lung, kidney and spleen (at protein level). Similar levels of isoforms 1 and 4 are observed in ovary, testis and pancreas (at protein level). In terms of tissue distribution, expressed at higher levels than isoform 1 in lung, kidney and spleen (at protein level). Expressed at lower levels than isoform 1 in liver, brain and heart (at protein level). Similar levels of isoforms 1 and 4 are observed in ovary, testis and pancreas (at protein level).

Its subcellular location is the nucleus inner membrane. It localises to the nucleus envelope. The protein localises to the nucleus. Required for nuclear membrane integrity. Induces TOR1A and TOR1B ATPase activity and is required for their location on the nuclear membrane. Binds to A- and B-type lamins. Possible role in membrane attachment and assembly of the nuclear lamina. The polypeptide is Torsin-1A-interacting protein 1 (TOR1AIP1) (Homo sapiens (Human)).